We begin with the raw amino-acid sequence, 499 residues long: Rhodopsin, GQ-coupled (499 aa).

The Extracellular portion of the chain corresponds to 1–50 (MADNKSTLPGLPDINGTLNRSMTPNTGWEGPYDMSVHLHWTQFPPVTEEW). Residues N4, N15, and N19 are each glycosylated (N-linked (GlcNAc...) asparagine). Residues 51–75 (HYIIGVYITIVGLLGIMGNTTVVYI) form a helical membrane-spanning segment. At 76–87 (FSNTKSLRSPSN) the chain is on the cytoplasmic side. A helical membrane pass occupies residues 88 to 114 (LFVVNLAVSDLIFSAVNGFPLLTVSSF). The Extracellular portion of the chain corresponds to 115-128 (HQKWIFGSLFCQLY). C125 and C203 are disulfide-bonded. Residues 129 to 148 (GFVGGVFGLMSINTLTAISI) form a helical membrane-spanning segment. Over 149 to 168 (DRYVVITKPLQASQTMTRRK) the chain is Cytoplasmic. Residues 169-192 (VHLMIVIVWVLSILLSIPPFFGWG) form a helical membrane-spanning segment. Residues 193–216 (AYIPEGFQTSCTFDYLTKTARTRT) are Extracellular-facing. Residues 217–244 (YIVVLYLFGFLIPLIIIGVCYVLIIRGV) form a helical membrane-spanning segment. The Cytoplasmic segment spans residues 245-278 (RRHDQKMLTITRSMKTEDARANNKRARSELRISK). Residues 279–302 (IAMTVTCLFIISWSPYAIIALIAQ) traverse the membrane as a helical segment. Residues 303–310 (FGPAHWIT) lie on the Extracellular side of the membrane. A helical transmembrane segment spans residues 311-335 (PLVSELPMMLAKSSSMHNPVVYALS). Position 322 is an N6-(retinylidene)lysine (K322). At 336–499 (HPKFRKALYQ…QRVNGLTFNS (164 aa)) the chain is on the cytoplasmic side. 2 S-palmitoyl cysteine lipidation sites follow: C353 and C354.

The protein belongs to the G-protein coupled receptor 1 family. Opsin subfamily. Phosphorylated on some or all of the serine and threonine residues present in the C-terminal region. As to expression, retina. Expressed in the depolarizing cell layer of the photoreceptor cells distant from the lens.

Its subcellular location is the membrane. In terms of biological role, visual pigments such as rhodopsin and porphyropsin are light-absorbing molecules that mediate vision. Rhodopsin consists of an apoprotein, opsin, covalently linked to 11-cis-retinal. This receptor is coupled to the activation of phospholipase C. Porphyropsin consists of opsin covalently linked to 11-cis 3,4-didehydroretinal. In Mizuhopecten yessoensis (Japanese scallop), this protein is Rhodopsin, GQ-coupled (SCOP1).